Here is a 681-residue protein sequence, read N- to C-terminus: MQKGNIGVTTENIFPIIKKFLYSDHEIFLRELVSNAVDATQKLNTLASISEFKGELGDLTVHVSLGKDTITISDRGIGLTAEEIDKYINQIAFSGANDFLEKYKNDANAIIGHFGLGFYSAFMVSKKVEIITKSYKEGAQAVKWTCDGSPEFTLEEVEKADRGTDIVLYIDDDCKEFLEESRISALLKKYCSFLPVPIAFGKKKEWKDGKQVETAEDNVINDTIPLWTKKPSELSDEDYKKFYRELYPMSDEPLFWIHLNVDYPFHLTGILYFPKVKSNIDLNKNKIQLYCNQVYVTDSVEGIVPDFLTLLHGVLDSPDIPLNVSRSYLQSDSNVKKISTYISKKVSDRLQSIFKNDRAQFEEKWNDLKIFINYGMLTQEDFYDKAQKFALFTDTDGKHYTFEEYQTLIKDNQTDKDKNLIYLYANNKDEQFAYIEAAKNKGYNVLLMDGQLDVAMVSMLEQKLEKSRFTRVDSDVVDNLIVKEDKKSDVLEASKQEALSAAFKSQLPKMEKVEFNVMIQALGENGSPVMITQSEYMRRMKEMANIQAGMSFYGEMPDMFNLVLNSDHKLVKEVLADEEKECSAAIAPIQTELEDVTKRRDALKKKQEGKKDEDIPTAEKDELNDLDKKWDELKQQKDSIFAGYAGKNKVVRQLIDLALLQNNMLKGEALNNFVKRSIELI.

The segment at 1-326 is a; substrate-binding; the sequence is MQKGNIGVTT…SPDIPLNVSR (326 aa). The b stretch occupies residues 327-545; sequence SYLQSDSNVK…YMRRMKEMAN (219 aa). The tract at residues 546 to 681 is c; the sequence is IQAGMSFYGE…NFVKRSIELI (136 aa). The segment at 601–620 is disordered; that stretch reads DALKKKQEGKKDEDIPTAEK.

This sequence belongs to the heat shock protein 90 family. Homodimer.

Its subcellular location is the cytoplasm. Functionally, molecular chaperone. Has ATPase activity. This Bacteroides fragilis (strain 638R) protein is Chaperone protein htpG.